A 121-amino-acid chain; its full sequence is Spermidine export protein MdtJ (121 aa).

A topological domain (cytoplasmic) is located at residue M1. The chain crosses the membrane as a helical span at residues 2-22; the sequence is YIYWILLGLAVATEITGTLSM. Topologically, residues 23–31 are periplasmic; the sequence is KWASVSEGN. The helical transmembrane segment at 32–52 threads the bilayer; sequence GGFILMLVMISLSYIFLSFAV. The Cytoplasmic portion of the chain corresponds to 53–54; the sequence is KK. The chain crosses the membrane as a helical span at residues 55–75; it reads IALGVAYALWEGIGILFITLF. The Periplasmic segment spans residues 76–81; that stretch reads SVLLFD. A helical transmembrane segment spans residues 82–102; sequence ESLSLMKIAGLTTLVAGIVLI. The Cytoplasmic segment spans residues 103–121; the sequence is KSGTRKARKPELEVNHGAV.

Belongs to the drug/metabolite transporter (DMT) superfamily. Small multidrug resistance (SMR) (TC 2.A.7.1) family. MdtJ subfamily. Forms a complex with MdtI.

Its subcellular location is the cell inner membrane. In terms of biological role, catalyzes the excretion of spermidine. The chain is Spermidine export protein MdtJ (mdtJ) from Escherichia coli O6:H1 (strain CFT073 / ATCC 700928 / UPEC).